Here is a 340-residue protein sequence, read N- to C-terminus: UDP-N-acetylenolpyruvoylglucosamine reductase (340 aa).

In terms of domain architecture, FAD-binding PCMH-type spans 11-181 (ISVKAKKIIS…VAIGLKLKKK (171 aa)). Residue arginine 156 is part of the active site. The Proton donor role is filled by serine 227. Glutamate 323 is a catalytic residue.

This sequence belongs to the MurB family. Requires FAD as cofactor.

The protein resides in the cytoplasm. It catalyses the reaction UDP-N-acetyl-alpha-D-muramate + NADP(+) = UDP-N-acetyl-3-O-(1-carboxyvinyl)-alpha-D-glucosamine + NADPH + H(+). It functions in the pathway cell wall biogenesis; peptidoglycan biosynthesis. Its function is as follows. Cell wall formation. This is UDP-N-acetylenolpyruvoylglucosamine reductase from Wigglesworthia glossinidia brevipalpis.